The primary structure comprises 450 residues: Glutamyl-tRNA(Gln) amidotransferase subunit A, mitochondrial (450 aa).

Catalysis depends on charge relay system residues lysine 47 and serine 122. Catalysis depends on serine 146, which acts as the Acyl-ester intermediate.

This sequence belongs to the amidase family. GatA subfamily. Subunit of the heterotrimeric GatFAB amidotransferase (AdT) complex, composed of A, B and F subunits.

Its subcellular location is the mitochondrion. It catalyses the reaction L-glutamyl-tRNA(Gln) + L-glutamine + ATP + H2O = L-glutaminyl-tRNA(Gln) + L-glutamate + ADP + phosphate + H(+). Functionally, allows the formation of correctly charged Gln-tRNA(Gln) through the transamidation of misacylated Glu-tRNA(Gln) in the mitochondria. The reaction takes place in the presence of glutamine and ATP through an activated gamma-phospho-Glu-tRNA(Gln). This Candida albicans (strain WO-1) (Yeast) protein is Glutamyl-tRNA(Gln) amidotransferase subunit A, mitochondrial.